We begin with the raw amino-acid sequence, 345 residues long: uncharacterized protein (345 aa).

The span at 1–13 shows a compositional bias: polar residues; sequence MSKPNTETISVNI. Positions 1–23 are disordered; the sequence is MSKPNTETISVNIPESEGVPLPD. Residues 283–316 adopt a coiled-coil conformation; that stretch reads SLKQRTNILKKQGETLKKNVEDINKDTSNLKRHA.

Its subcellular location is the virion. This is an uncharacterized protein from Acanthamoeba polyphaga mimivirus (APMV).